The chain runs to 349 residues: Probable dual-specificity RNA methyltransferase RlmN (349 aa).

Catalysis depends on E94, which acts as the Proton acceptor. The region spanning 100-321 (DEDRATLCVS…TQHGVFATIR (222 aa)) is the Radical SAM core domain. C107 and C332 are disulfide-bonded. [4Fe-4S] cluster is bound by residues C114, C118, and C121. S-adenosyl-L-methionine contacts are provided by residues 159 to 160 (GE), S191, 213 to 215 (SMH), and H289. C332 serves as the catalytic S-methylcysteine intermediate.

Belongs to the radical SAM superfamily. RlmN family. It depends on [4Fe-4S] cluster as a cofactor.

The protein resides in the cytoplasm. The enzyme catalyses adenosine(2503) in 23S rRNA + 2 reduced [2Fe-2S]-[ferredoxin] + 2 S-adenosyl-L-methionine = 2-methyladenosine(2503) in 23S rRNA + 5'-deoxyadenosine + L-methionine + 2 oxidized [2Fe-2S]-[ferredoxin] + S-adenosyl-L-homocysteine. It carries out the reaction adenosine(37) in tRNA + 2 reduced [2Fe-2S]-[ferredoxin] + 2 S-adenosyl-L-methionine = 2-methyladenosine(37) in tRNA + 5'-deoxyadenosine + L-methionine + 2 oxidized [2Fe-2S]-[ferredoxin] + S-adenosyl-L-homocysteine. Functionally, specifically methylates position 2 of adenine 2503 in 23S rRNA and position 2 of adenine 37 in tRNAs. The polypeptide is Probable dual-specificity RNA methyltransferase RlmN (Phocaeicola vulgatus (strain ATCC 8482 / DSM 1447 / JCM 5826 / CCUG 4940 / NBRC 14291 / NCTC 11154) (Bacteroides vulgatus)).